Here is a 281-residue protein sequence, read N- to C-terminus: Nucleoid occlusion protein (281 aa).

Residues 1-26 (MKHPFSRLFSFGEKEQEEAGGKQERE) form a disordered region. A compositionally biased stretch (basic and acidic residues) spans 12–26 (GEKEQEEAGGKQERE). Positions 145–164 (EALAQRLGKGQSTIANKLRL) form a DNA-binding region, H-T-H motif.

It belongs to the ParB family.

It localises to the cytoplasm. The protein resides in the nucleoid. In terms of biological role, effects nucleoid occlusion by binding relatively nonspecifically to DNA and preventing the assembly of the division machinery in the vicinity of the nucleoid, especially under conditions that disturb the cell cycle. It helps to coordinate cell division and chromosome segregation by preventing the formation of the Z ring through the nucleoid, which would cause chromosome breakage. The polypeptide is Nucleoid occlusion protein (Geobacillus thermodenitrificans (strain NG80-2)).